We begin with the raw amino-acid sequence, 327 residues long: E3 ubiquitin ligase RNF121 (327 aa).

Ala-2 is modified (N-acetylalanine). A run of 5 helical transmembrane segments spans residues Met-50–Val-70, Ser-79–Leu-99, His-100–Phe-120, Ala-148–Phe-168, and Pro-172–Leu-192. Residues Cys-226–Lys-276 form an RING-type; atypical zinc finger. Residues Leu-306–Leu-326 form a helical membrane-spanning segment.

It belongs to the RNF121 family.

Its subcellular location is the endoplasmic reticulum membrane. It carries out the reaction S-ubiquitinyl-[E2 ubiquitin-conjugating enzyme]-L-cysteine + [acceptor protein]-L-lysine = [E2 ubiquitin-conjugating enzyme]-L-cysteine + N(6)-ubiquitinyl-[acceptor protein]-L-lysine.. It participates in protein modification; protein ubiquitination. E3 ubiquitin ligase which accepts ubiquitin and transfers it to substrates thereby promoting their degradation by the endoplasmic reticulum-associated degradation (ERAD) pathway which is a pathway involved in ubiquitin-dependent degradation of misfolded endoplasmic reticulum proteins. May regulate the unfolded protein response to reduce endoplasmic reticulum stress. The protein is E3 ubiquitin ligase RNF121 (RNF121) of Homo sapiens (Human).